The chain runs to 486 residues: Alliin lyase 1 (486 aa).

The first 28 residues, 1-28, serve as a signal peptide directing secretion; sequence MVESYKKIGSCNKMPCLVILTCIIMSNS. A propeptide spanning residues 29–38 is cleaved from the precursor; that stretch reads LVNNNNMVQA. Residues 51 to 97 enclose the EGF-like; atypical domain; the sequence is EAVANINCSEHGRAFLDGIISEGSPKCECNTCYTGPDCSEKIQGCSA. Asn57 is a glycosylation site (N-linked (GlcNAc...) asparagine). 3 disulfides stabilise this stretch: Cys58/Cys77, Cys79/Cys88, and Cys82/Cys95. 130–138 lines the chloride pocket; the sequence is YFFNPVSNF. Residues Asn184 and Asn229 are each glycosylated (N-linked (GlcNAc...) asparagine). Residue Lys289 is modified to N6-(pyridoxal phosphate)lysine. An N-linked (GlcNAc...) asparagine glycan is attached at Asn366. Cysteines 406 and 414 form a disulfide.

This sequence belongs to the alliinase family. As to quaternary structure, homodimer. Requires pyridoxal 5'-phosphate as cofactor. In terms of tissue distribution, expressed in bulb (at protein level). Expressed in shoots.

Its subcellular location is the vacuole. It carries out the reaction an S-alkyl-L-cysteine S-oxide = an S-alkyl sulfenate + 2-aminoprop-2-enoate. Its function is as follows. Able to cleave the C-S bond of sulfoxide derivatives of Cys to produce allicin, thus giving rise to all sulfur compounds which are responsible for most of the properties of garlic, such as the specific smell and flavor as well as the health benefits like blood lipid or blood pressure lowering. The polypeptide is Alliin lyase 1 (Allium sativum (Garlic)).